A 396-amino-acid chain; its full sequence is Ribosomal RNA large subunit methyltransferase I (396 aa).

The PUA domain maps to serine 2–arginine 81.

It belongs to the methyltransferase superfamily. RlmI family.

The protein localises to the cytoplasm. It catalyses the reaction cytidine(1962) in 23S rRNA + S-adenosyl-L-methionine = 5-methylcytidine(1962) in 23S rRNA + S-adenosyl-L-homocysteine + H(+). In terms of biological role, specifically methylates the cytosine at position 1962 (m5C1962) of 23S rRNA. The sequence is that of Ribosomal RNA large subunit methyltransferase I from Escherichia coli O127:H6 (strain E2348/69 / EPEC).